A 102-amino-acid polypeptide reads, in one-letter code: uncharacterized protein (102 aa).

The protein belongs to the Gram-positive plasmids replication protein type 2 family.

This is an uncharacterized protein from Staphylococcus aureus.